A 145-amino-acid polypeptide reads, in one-letter code: Nicking endonuclease (145 aa).

The disordered stretch occupies residues 126–145 (NPQEKTQVKTETKSGFARFL).

Endonuclease responsible for the single-chain interruptions (nicks) located at specific positions in the minus strand of the viral genome. The protein is Nicking endonuclease of Escherichia phage T5 (Enterobacteria phage T5).